A 299-amino-acid polypeptide reads, in one-letter code: Taste receptor type 2 member 1 (299 aa).

Residues 1–9 (MLESHLIIY) are Extracellular-facing. A helical membrane pass occupies residues 10 to 30 (FLLAVIQFLLGTFTNGIIVVV). The Cytoplasmic segment spans residues 31–55 (NGIDLIKHRKMAPLDLLLSCLAVSR). Residues 56 to 76 (IFLQLFIFYINVVVIFLIEFI) traverse the membrane as a helical segment. The Extracellular segment spans residues 77-81 (TCSAS). Residues 82–102 (CAFLVFVNELELWLATWLGVF) form a helical membrane-spanning segment. The Cytoplasmic segment spans residues 103-124 (YCAKVASVLHPLFIWLKMRISK). The chain crosses the membrane as a helical span at residues 125–145 (SVPWMILGSLLYVSMICIFHI). The Extracellular portion of the chain corresponds to 146–178 (KYTGFMVPYFLRNLFFQNATIQTEVKQAIQIFS). A glycan (N-linked (GlcNAc...) asparagine) is linked at Asn163. Residues 179 to 199 (FVAELLVPLLIFLVAVLLLIF) form a helical membrane-spanning segment. Over 200–222 (SLGRHTRQMRNTVAGSRVPGRGA) the chain is Cytoplasmic. A helical membrane pass occupies residues 223-243 (HISALLSILSFLILYISHYLI). At 244–257 (KTFLSSLKFHVKRF) the chain is on the extracellular side. A helical transmembrane segment spans residues 258-278 (VFLFCILVIGTYPSGHSLILI). Residues 279 to 299 (LGNPKLKQNTKKFLCHSKCCQ) lie on the Cytoplasmic side of the membrane.

Belongs to the G-protein coupled receptor T2R family.

It localises to the membrane. In terms of biological role, receptor that may play a role in the perception of bitterness and is gustducin-linked. May play a role in sensing the chemical composition of the gastrointestinal content. The activity of this receptor may stimulate alpha gustducin, mediate PLC-beta-2 activation and lead to the gating of TRPM5. This is Taste receptor type 2 member 1 (TAS2R1) from Chlorocebus aethiops (Green monkey).